A 383-amino-acid chain; its full sequence is Odorant receptor 94b (383 aa).

At 1-41 the chain is on the cytoplasmic side; it reads MESTNRLSAIQTLLVIQRWIGLLKWENEGEDGVLTWLKRIY. Residues 42 to 62 traverse the membrane as a helical segment; it reads PFVLHLPLTFTYIALMWYEAI. The Extracellular segment spans residues 63-70; it reads TSSDFEEA. A helical transmembrane segment spans residues 71 to 91; the sequence is GQVLYMSITELALVTKLLNIW. Topologically, residues 92–130 are cytoplasmic; sequence YRRHEAASLIHELQHDPAFNLRNSEEIKFWQQNQRNFKR. The helical transmembrane segment at 131–151 threads the bilayer; that stretch reads IFYWYIWGSLFVAVMGYISVF. The Extracellular segment spans residues 152–174; sequence FQEDYELPFGYYVPFEWRTRERY. Residues 175 to 195 form a helical membrane-spanning segment; it reads FYAWGYNVVAMTLCCLSNILL. Over 196–250 the chain is Cytoplasmic; the sequence is DTLGCYFMFHIASLFRLLGMRLEALKNAAEEKARPELRRIFQLHTKVRRLTRECE. A helical transmembrane segment spans residues 251–271; it reads VLVSPYVLSQVVFSAFIICFS. Residues 272-284 lie on the Extracellular side of the membrane; it reads AYRLVHMGFKQRP. Residues 285-305 form a helical membrane-spanning segment; it reads GLFVTTVQFVAVMIVQIFLPC. At 306–358 the chain is on the cytoplasmic side; sequence YYGNELTFHANALTNSVFGTNWLEYSVGTRKLLNCYMEFLKRPVKVRAGVFFE. The chain crosses the membrane as a helical span at residues 359-379; the sequence is IGLPIFVKTINNAYSFFALLL. Topologically, residues 380 to 383 are extracellular; sequence KISK.

Belongs to the insect chemoreceptor superfamily. Heteromeric odorant receptor channel (TC 1.A.69) family. Or2a subfamily. As to quaternary structure, interacts with Orco. Complexes exist early in the endomembrane system in olfactory sensory neurons (OSNs), coupling these complexes to the conserved ciliary trafficking pathway.

Its subcellular location is the cell membrane. In terms of biological role, odorant receptor which mediates acceptance or avoidance behavior, depending on its substrates. The odorant receptor repertoire encodes a large collection of odor stimuli that vary widely in identity, intensity, and duration. May form a complex with Orco to form odorant-sensing units, providing sensitive and prolonged odorant signaling and calcium permeability. This is Odorant receptor 94b (Or94b) from Drosophila melanogaster (Fruit fly).